The primary structure comprises 546 residues: Chaperonin GroEL (546 aa).

ATP-binding positions include 30 to 33 (TLGP), K51, 87 to 91 (DGTTT), G415, and D496. The interval 526-546 (PEDKPAPAMPGGMGGMGGMDF) is disordered. The segment covering 536-546 (GGMGGMGGMDF) has biased composition (gly residues).

It belongs to the chaperonin (HSP60) family. As to quaternary structure, forms a cylinder of 14 subunits composed of two heptameric rings stacked back-to-back. Interacts with the co-chaperonin GroES.

It localises to the cytoplasm. It catalyses the reaction ATP + H2O + a folded polypeptide = ADP + phosphate + an unfolded polypeptide.. Functionally, together with its co-chaperonin GroES, plays an essential role in assisting protein folding. The GroEL-GroES system forms a nano-cage that allows encapsulation of the non-native substrate proteins and provides a physical environment optimized to promote and accelerate protein folding. This Zymomonas mobilis subsp. mobilis (strain ATCC 31821 / ZM4 / CP4) protein is Chaperonin GroEL.